Here is a 351-residue protein sequence, read N- to C-terminus: Transaldolase (351 aa).

Catalysis depends on lysine 138, which acts as the Schiff-base intermediate with substrate.

Belongs to the transaldolase family. Type 2 subfamily.

The protein resides in the cytoplasm. It carries out the reaction D-sedoheptulose 7-phosphate + D-glyceraldehyde 3-phosphate = D-erythrose 4-phosphate + beta-D-fructose 6-phosphate. The protein operates within carbohydrate degradation; pentose phosphate pathway; D-glyceraldehyde 3-phosphate and beta-D-fructose 6-phosphate from D-ribose 5-phosphate and D-xylulose 5-phosphate (non-oxidative stage): step 2/3. Functionally, transaldolase is important for the balance of metabolites in the pentose-phosphate pathway. The polypeptide is Transaldolase (Neisseria meningitidis serogroup C / serotype 2a (strain ATCC 700532 / DSM 15464 / FAM18)).